A 586-amino-acid chain; its full sequence is Paxillin (586 aa).

Residue methionine 1 is modified to N-acetylmethionine. The short motif at 3 to 15 (DLDALLADLESTT) is the LD motif 1 element. Residues 13–138 (STTSHISKRP…PSPTVMSSSL (126 aa)) form a disordered region. Tyrosine 31 is subject to Phosphotyrosine; by PTK6. A compositionally biased stretch (pro residues) spans 45 to 54 (VPPPVPPPPS). A phosphoserine mark is found at serine 83 and serine 85. Residues 86 to 98 (PIYSSSTKNSSAS) show a composition bias toward low complexity. Residue tyrosine 88 is modified to Phosphotyrosine. A Phosphoserine modification is found at serine 106. Tyrosine 118 is modified (phosphotyrosine; by PTK6). 3 positions are modified to phosphoserine: serine 119, serine 126, and serine 130. Residues 121 to 137 (PNKQKSAEPSPTVMSSS) are compositionally biased toward polar residues. Phosphothreonine is present on threonine 132. Serine 137, serine 140, and serine 143 each carry phosphoserine. Residues 144–156 (ELDRLLLELNAVQ) carry the LD motif 2 motif. Tyrosine 210 carries the phosphotyrosine modification. Positions 220 to 241 (GGKAGPLMKEKPKRNGGRGLED) are disordered. The LD motif 3 motif lies at 245–257 (SVESLLDELENSV). The residue at position 259 (serine 259) is a Phosphoserine. The tract at residues 266–290 (VNQGEMSSPQRVTSSQQQTRISASS) is disordered. Serine 273 is subject to Phosphoserine; by CDK5. Phosphoserine is present on residues serine 279, serine 287, serine 290, serine 301, serine 317, serine 327, and serine 335. A required for binding to PARVA and ILK region spans residues 291–310 (ATRELDELMASLSDFKFMAQ). The LD motif 4 signature appears at 294–305 (ELDELMASLSDF). The tract at residues 309-329 (AQGKTGSSSPPGGLSKPGSQL) is disordered. Residues 310 to 329 (QGKTGSSSPPGGLSKPGSQL) are compositionally biased toward low complexity. An LD motif 5 motif is present at residues 328 to 340 (QLDSMLGSLQSDL). 3 LIM zinc-binding domains span residues 353–403 (CGAC…CEKD), 412–462 (CYYC…CRKD), and 471–521 (CGGC…CEVH). Serine 528 is subject to Phosphoserine. Positions 530–580 (CSGCQKPITGRCITAMAKKFHPEHFVCAFCLKQLNKGTFKEQNDKPYCQSC) constitute an LIM zinc-binding 4 domain.

This sequence belongs to the paxillin family. In terms of assembly, interacts in vitro with VCL/vinculin as well as to the SH3 domain of SRC and, when tyrosine phosphorylated, to the SH2 domain of CRK. Interacts with GIT1. Interacts with NUDT16L1/SDOS. Interacts with PTK2/FAK1. Interacts with PTK2B/PYK2. Interacts with ASAP2. Interacts with unphosphorylated ITGA4. Interacts with RNF5. Interacts with PDCD10. Interacts with NEK3, the interaction is prolactin-dependent. Interacts with PTK6. Interacts with TGFB1I1. Interacts with SORBS1. Interacts with PARVB. Interacts (via LD motif 4) with PARVA/PARVIN. Interacts (via LD motif 4) with ILK. Interacts (via cytoplasmic domain) with CEACAM1; the interaction is phosphotyrosyl-dependent. Interacts with LIMA1; this complex stabilizes actin dynamics. Interacts with CD36 (via C-terminus). Interacts with TRIM15. Interacts with PAK4; PAK4 acts as a scaffold to suppport PAXI phosphorylation at Ser-301. In terms of processing, phosphorylated by MAPK1/ERK2. Phosphorylated on tyrosine residues during integrin-mediated cell adhesion, embryonic development, fibroblast transformation and following stimulation of cells by mitogens. Phosphorylation at Ser-273 by CDK5 reduces its interaction with PTK2/FAK1 in matrix-cell focal adhesions (MCFA) during oligodendrocytes (OLs) differentiation. Phosphorylation at Tyr-31 and Tyr-118 by PTK6 promote the activation of RAC1 via CRK/CrKII, thereby promoting migration and invasion. Phosphorylation at Ser-279 by SLK is required for PXN redistribution and cell motility. Phosphorylation at Ser-301 promotes focal adhesion disassembly during cell migration.

It localises to the cytoplasm. Its subcellular location is the cytoskeleton. It is found in the cell junction. The protein localises to the focal adhesion. The protein resides in the cell cortex. In terms of biological role, cytoskeletal protein involved in actin-membrane attachment at sites of cell adhesion to the extracellular matrix (focal adhesion). Recruits other proteins such as TRIM15 to focal adhesion. The chain is Paxillin from Rattus norvegicus (Rat).